The chain runs to 108 residues: T-cell acute lymphocytic leukemia protein 2 homolog (108 aa).

In terms of domain architecture, bHLH spans 2 to 54 (TRKIFTNTRERWRQQSVNNAFAKLRKLIPTHPPDKKLSKNETLRLAMRYINFL). The interval 76–108 (GLFPPKTRLPDEDDRTLLNDYRVPSPGPSHGAP) is disordered.

The protein is T-cell acute lymphocytic leukemia protein 2 homolog (Tal2) of Mus musculus (Mouse).